Here is a 371-residue protein sequence, read N- to C-terminus: Probable trehalose-phosphate phosphatase 1 (371 aa).

It belongs to the trehalose phosphatase family. It depends on a divalent metal cation as a cofactor. Expressed in roots and shoots.

The enzyme catalyses alpha,alpha-trehalose 6-phosphate + H2O = alpha,alpha-trehalose + phosphate. It participates in glycan biosynthesis; trehalose biosynthesis. Functionally, removes the phosphate from trehalose 6-phosphate to produce free trehalose. Trehalose accumulation in plant improves abiotic stress tolerance. This is Probable trehalose-phosphate phosphatase 1 (TPP1) from Oryza sativa subsp. japonica (Rice).